The chain runs to 136 residues: Large ribosomal subunit protein uL16 (136 aa).

Belongs to the universal ribosomal protein uL16 family. Part of the 50S ribosomal subunit.

Binds 23S rRNA and is also seen to make contacts with the A and possibly P site tRNAs. The chain is Large ribosomal subunit protein uL16 from Aggregatibacter actinomycetemcomitans (Actinobacillus actinomycetemcomitans).